Reading from the N-terminus, the 199-residue chain is Recombination protein RecR (199 aa).

The C4-type zinc finger occupies 58–73 (CKKCFNLTSEDECEIC). Positions 81-175 (KLICVVAETK…KVTRIAYGLP (95 aa)) constitute a Toprim domain.

Belongs to the RecR family.

Its function is as follows. May play a role in DNA repair. It seems to be involved in an RecBC-independent recombinational process of DNA repair. It may act with RecF and RecO. In Prochlorococcus marinus (strain MIT 9301), this protein is Recombination protein RecR.